We begin with the raw amino-acid sequence, 239 residues long: Phosphoribosylaminoimidazole-succinocarboxamide synthase (239 aa).

It belongs to the SAICAR synthetase family.

The catalysed reaction is 5-amino-1-(5-phospho-D-ribosyl)imidazole-4-carboxylate + L-aspartate + ATP = (2S)-2-[5-amino-1-(5-phospho-beta-D-ribosyl)imidazole-4-carboxamido]succinate + ADP + phosphate + 2 H(+). Its pathway is purine metabolism; IMP biosynthesis via de novo pathway; 5-amino-1-(5-phospho-D-ribosyl)imidazole-4-carboxamide from 5-amino-1-(5-phospho-D-ribosyl)imidazole-4-carboxylate: step 1/2. This Bacillus mycoides (strain KBAB4) (Bacillus weihenstephanensis) protein is Phosphoribosylaminoimidazole-succinocarboxamide synthase.